The sequence spans 285 residues: Pantothenate synthetase (285 aa).

Met-30–His-37 serves as a coordination point for ATP. Catalysis depends on His-37, which acts as the Proton donor. (R)-pantoate is bound at residue Gln-61. Gln-61 contacts beta-alanine. Gly-149–Asp-152 is a binding site for ATP. Gln-155 provides a ligand contact to (R)-pantoate. ATP is bound by residues Val-178 and Leu-186 to Arg-189.

This sequence belongs to the pantothenate synthetase family. Homodimer.

The protein localises to the cytoplasm. It catalyses the reaction (R)-pantoate + beta-alanine + ATP = (R)-pantothenate + AMP + diphosphate + H(+). The protein operates within cofactor biosynthesis; (R)-pantothenate biosynthesis; (R)-pantothenate from (R)-pantoate and beta-alanine: step 1/1. Its function is as follows. Catalyzes the condensation of pantoate with beta-alanine in an ATP-dependent reaction via a pantoyl-adenylate intermediate. This is Pantothenate synthetase from Aeromonas hydrophila subsp. hydrophila (strain ATCC 7966 / DSM 30187 / BCRC 13018 / CCUG 14551 / JCM 1027 / KCTC 2358 / NCIMB 9240 / NCTC 8049).